A 357-amino-acid polypeptide reads, in one-letter code: Protein RecA (357 aa).

67–74 is an ATP binding site; the sequence is GPESSGKT. The segment at 335–357 is disordered; sequence LASSASDDESTEGNIDLETGEIF.

This sequence belongs to the RecA family.

The protein resides in the cytoplasm. Can catalyze the hydrolysis of ATP in the presence of single-stranded DNA, the ATP-dependent uptake of single-stranded DNA by duplex DNA, and the ATP-dependent hybridization of homologous single-stranded DNAs. It interacts with LexA causing its activation and leading to its autocatalytic cleavage. The protein is Protein RecA of Shewanella putrefaciens (strain CN-32 / ATCC BAA-453).